The following is a 135-amino-acid chain: Large ribosomal subunit protein uL16c (135 aa).

Belongs to the universal ribosomal protein uL16 family. As to quaternary structure, part of the 50S ribosomal subunit.

Its subcellular location is the plastid. It is found in the chloroplast. The sequence is that of Large ribosomal subunit protein uL16c from Vitis vinifera (Grape).